The following is a 450-amino-acid chain: MGELQTHMQLQTDTIHEGVRKENWFAKAMNIKVGIIPLPVYALLFILITVFVMHHDVKSDILTSIAVMAFFGFTFAQIGKSIPIVRSIGGPAILATFIPSAVVYYHLLPNDIVKSTTEFTENSNFLYLFIAGIVVGSILGMKRETLVKAFMKIFIPLIVGSVTAAIVGLAVGTLLGLGFQHTLLYIVIPIMAGGVGEGAIPLSIGYSDIMPISQGEAFALVLPSIMLGSLCAIILAGLLNRIGKKKPEWTGNGKVDRSEEESPALEESQSGQQMFNLSLFASGGILAVSLYLVGMLAHDFFGFPAPVAMLLLAVLIKLFRLVPASIENGAFGVSRFFSTAVTYPLLFAIGVSMTPWDKLVAAFNLSNIITILSVVVTMMAVGFFTGKWLNMYPIETAIINACHSGQGGTGDVAILSAAERLELMPFAQVSTRIGGAITVSLTLLLLHQFY.

Residues 1–32 (MGELQTHMQLQTDTIHEGVRKENWFAKAMNIK) are Cytoplasmic-facing. Residues 33-53 (VGIIPLPVYALLFILITVFVM) form a helical membrane-spanning segment. Residues 54–64 (HHDVKSDILTS) lie on the Extracellular side of the membrane. The chain crosses the membrane as a helical span at residues 65–85 (IAVMAFFGFTFAQIGKSIPIV). The Cytoplasmic portion of the chain corresponds to 86–87 (RS). A helical membrane pass occupies residues 88 to 108 (IGGPAILATFIPSAVVYYHLL). Residues 109-118 (PNDIVKSTTE) are Extracellular-facing. The chain crosses the membrane as a helical span at residues 119 to 139 (FTENSNFLYLFIAGIVVGSIL). Residues 140–152 (GMKRETLVKAFMK) lie on the Cytoplasmic side of the membrane. A helical transmembrane segment spans residues 153-173 (IFIPLIVGSVTAAIVGLAVGT). The Extracellular portion of the chain corresponds to 174-217 (LLGLGFQHTLLYIVIPIMAGGVGEGAIPLSIGYSDIMPISQGEA). The chain crosses the membrane as a helical span at residues 218 to 238 (FALVLPSIMLGSLCAIILAGL). Residues 239–273 (LNRIGKKKPEWTGNGKVDRSEEESPALEESQSGQQ) are Cytoplasmic-facing. A disordered region spans residues 249–268 (WTGNGKVDRSEEESPALEES). The helical transmembrane segment at 274–294 (MFNLSLFASGGILAVSLYLVG) threads the bilayer. Met295 is a topological domain (extracellular). Residues 296–316 (LAHDFFGFPAPVAMLLLAVLI) form a helical membrane-spanning segment. Residues 317-335 (KLFRLVPASIENGAFGVSR) lie on the Cytoplasmic side of the membrane. A helical membrane pass occupies residues 336–356 (FFSTAVTYPLLFAIGVSMTPW). Topologically, residues 357–364 (DKLVAAFN) are extracellular. A helical membrane pass occupies residues 365–385 (LSNIITILSVVVTMMAVGFFT). At 386-428 (GKWLNMYPIETAIINACHSGQGGTGDVAILSAAERLELMPFAQ) the chain is on the cytoplasmic side. Residues 429-446 (VSTRIGGAITVSLTLLLL) form a helical membrane-spanning segment. The Extracellular segment spans residues 447 to 450 (HQFY).

This sequence belongs to the 2-hydroxycarboxylate transporter (2-HCT) (TC 2.A.24) family.

Its subcellular location is the cell membrane. It catalyses the reaction citrate(in) + 3 H(+)(in) = citrate(out) + 3 H(+)(out). The catalysed reaction is (S)-malate(in) + 2 H(+)(in) = (S)-malate(out) + 2 H(+)(out). The uptake activity is inhibited by divalent metal ions such as Ca(2+), Mg(2+) and Ni(2+). Functionally, proton motive force-driven secondary transporter that catalyzes the uptake of both citrate and malate. Is an electroneutral proton-solute symporter: the number of protons transported is equal to the valence of the transported anions. Translocates the free citrate and malate anions. Citramalate binds to the transporter, but it is not translocated. Is strictly stereoselective, recognizing only the (S)-enantiomers of malate and citramalate. The sequence is that of Citrate/malate-proton symporter from Bacillus subtilis (strain 168).